We begin with the raw amino-acid sequence, 564 residues long: 5-aminolevulinate synthase, mitochondrial (564 aa).

The transit peptide at 1–57 directs the protein to the mitochondrion; that stretch reads MESITKVSMSVCPFVRSTSTQALRQLSQTSGALANQARQCPIAGNAIRAKEISIRSY. The substrate site is built by Arg-113, Ser-226, and Lys-245. Ser-278, His-306, and Thr-350 together coordinate pyridoxal 5'-phosphate. The active site involves Lys-353. Lys-353 is modified (N6-(pyridoxal phosphate)lysine). Positions 382 and 383 each coordinate pyridoxal 5'-phosphate. Thr-468 is a substrate binding site.

Belongs to the class-II pyridoxal-phosphate-dependent aminotransferase family. Homodimer. The cofactor is pyridoxal 5'-phosphate.

The protein localises to the mitochondrion matrix. The catalysed reaction is succinyl-CoA + glycine + H(+) = 5-aminolevulinate + CO2 + CoA. The protein operates within porphyrin-containing compound metabolism; protoporphyrin-IX biosynthesis; 5-aminolevulinate from glycine: step 1/1. Catalyzes the synthesis of 5-aminolevulinate (ALA) from succinyl-CoA and glycine, the first and rate-limiting step in heme biosynthesis. The polypeptide is 5-aminolevulinate synthase, mitochondrial (HEM1) (Candida albicans (strain SC5314 / ATCC MYA-2876) (Yeast)).